Consider the following 183-residue polypeptide: uncharacterized protein (183 aa).

This is an uncharacterized protein from Shigella flexneri.